The sequence spans 544 residues: Chaperonin GroEL (544 aa).

Residues 30 to 33 (TLGP), Lys51, 87 to 91 (DGTTT), Gly415, 479 to 481 (NAA), and Asp495 each bind ATP.

Belongs to the chaperonin (HSP60) family. Forms a cylinder of 14 subunits composed of two heptameric rings stacked back-to-back. Interacts with the co-chaperonin GroES.

The protein resides in the cytoplasm. The catalysed reaction is ATP + H2O + a folded polypeptide = ADP + phosphate + an unfolded polypeptide.. Together with its co-chaperonin GroES, plays an essential role in assisting protein folding. The GroEL-GroES system forms a nano-cage that allows encapsulation of the non-native substrate proteins and provides a physical environment optimized to promote and accelerate protein folding. In Acinetobacter baylyi (strain ATCC 33305 / BD413 / ADP1), this protein is Chaperonin GroEL.